Reading from the N-terminus, the 148-residue chain is Receptor activity-modifying protein 1 (148 aa).

The N-terminal stretch at 1–26 is a signal peptide; it reads MARALCRLPRRGLWLLLAHHLFMTTA. 3 cysteine pairs are disulfide-bonded: Cys-27–Cys-82, Cys-40–Cys-72, and Cys-57–Cys-104. Topologically, residues 27 to 118 are extracellular; the sequence is CQEANYGALL…RAVRDPPGSI (92 aa). Residues 119–140 form a helical membrane-spanning segment; that stretch reads LYPFIVVPITVTLLVTALVVWQ. Topologically, residues 141–148 are cytoplasmic; it reads SKRTEGIV.

Belongs to the RAMP family. As to quaternary structure, heterodimer of CALCRL and RAMP1; the interaction induces allosteric modulation of CALCRL function and CGRP1/CALCA and CGRP2/CALCB ligand specificity. Heterodimer of CALCR and RAMP1; interaction forms the AMYR1 receptor complex for amylin/IAPP and CGRP1/CALCA ligands. Expressed in many tissues including the uterus, bladder, brain, pancreas and gastro-intestinal tract.

It is found in the cell membrane. In terms of biological role, accessory protein that interacts with and modulates the function of G-protein coupled receptors including calcitonin gene-related peptide type 1 receptor (CALCRL) and calcitonin receptor (CALCR). Required for the transport of CALCRL to the plasma membrane. Together with CALCRL, form the receptor complex for the calcitonin gene-related peptides CGRP1/CALCA and CGRP2/CALCB. Together with CALCR, form the AMYR1 receptor complex for amylin/IAPP and CGRP1/CALCA. The polypeptide is Receptor activity-modifying protein 1 (Homo sapiens (Human)).